The chain runs to 245 residues: Uridylate kinase (245 aa).

14–17 (KLSG) contacts ATP. G56 is a binding site for UMP. Positions 57 and 61 each coordinate ATP. Residues D76 and 137 to 144 (TGLPFFTT) contribute to the UMP site. Residues T164, Y170, and D173 each coordinate ATP.

It belongs to the UMP kinase family. In terms of assembly, homohexamer.

Its subcellular location is the cytoplasm. It carries out the reaction UMP + ATP = UDP + ADP. It participates in pyrimidine metabolism; CTP biosynthesis via de novo pathway; UDP from UMP (UMPK route): step 1/1. With respect to regulation, inhibited by UTP. Functionally, catalyzes the reversible phosphorylation of UMP to UDP. This chain is Uridylate kinase, found in Syntrophobacter fumaroxidans (strain DSM 10017 / MPOB).